The following is a 479-amino-acid chain: Ribulose bisphosphate carboxylase large chain (479 aa).

The propeptide occupies Met1 to Ser2. Positions 123 and 173 each coordinate substrate. The active-site Proton acceptor is the Lys175. A substrate-binding site is contributed by Lys177. The Mg(2+) site is built by Lys201, Asp203, and Glu204. Lys201 is modified (N6-carboxylysine). Ser208 carries the post-translational modification Phosphoserine. His294 acts as the Proton acceptor in catalysis. Substrate-binding residues include Arg295 and His327. Thr330 bears the Phosphothreonine mark. Ser379 lines the substrate pocket.

Belongs to the RuBisCO large chain family. Type I subfamily. In terms of assembly, heterohexadecamer of 8 large chains and 8 small chains; disulfide-linked. The disulfide link is formed within the large subunit homodimers. Mg(2+) is required as a cofactor. In terms of processing, the disulfide bond which can form in the large chain dimeric partners within the hexadecamer appears to be associated with oxidative stress and protein turnover.

It localises to the plastid. It is found in the chloroplast. It carries out the reaction 2 (2R)-3-phosphoglycerate + 2 H(+) = D-ribulose 1,5-bisphosphate + CO2 + H2O. The catalysed reaction is D-ribulose 1,5-bisphosphate + O2 = 2-phosphoglycolate + (2R)-3-phosphoglycerate + 2 H(+). Functionally, ruBisCO catalyzes two reactions: the carboxylation of D-ribulose 1,5-bisphosphate, the primary event in carbon dioxide fixation, as well as the oxidative fragmentation of the pentose substrate in the photorespiration process. Both reactions occur simultaneously and in competition at the same active site. The chain is Ribulose bisphosphate carboxylase large chain from Draba nemorosa (Woodland whitlowgrass).